A 289-amino-acid chain; its full sequence is Ribosomal RNA small subunit methyltransferase H (289 aa).

S-adenosyl-L-methionine-binding positions include 40–42, Asp60, Phe84, Asp106, and Gln113; that span reads GGH.

Belongs to the methyltransferase superfamily. RsmH family.

It localises to the cytoplasm. The enzyme catalyses cytidine(1402) in 16S rRNA + S-adenosyl-L-methionine = N(4)-methylcytidine(1402) in 16S rRNA + S-adenosyl-L-homocysteine + H(+). In terms of biological role, specifically methylates the N4 position of cytidine in position 1402 (C1402) of 16S rRNA. In Haemophilus influenzae (strain PittGG), this protein is Ribosomal RNA small subunit methyltransferase H.